Consider the following 71-residue polypeptide: Putative membrane protein insertion efficiency factor (71 aa).

The protein belongs to the UPF0161 family.

The protein localises to the cell inner membrane. Could be involved in insertion of integral membrane proteins into the membrane. In Nitrosospira multiformis (strain ATCC 25196 / NCIMB 11849 / C 71), this protein is Putative membrane protein insertion efficiency factor.